The following is a 348-amino-acid chain: Dihydroorotase (348 aa).

The Zn(2+) site is built by His13 and His15. Residues 15-17 (HLR) and Asn41 contribute to the substrate site. Positions 99, 136, and 174 each coordinate Zn(2+). Lys99 is subject to N6-carboxylysine. Residue His136 coordinates substrate. Leu219 is a substrate binding site. Asp247 is a binding site for Zn(2+). Asp247 is an active-site residue. The substrate site is built by His251 and Ala263.

The protein belongs to the metallo-dependent hydrolases superfamily. DHOase family. Class II DHOase subfamily. In terms of assembly, homodimer. Zn(2+) serves as cofactor.

The enzyme catalyses (S)-dihydroorotate + H2O = N-carbamoyl-L-aspartate + H(+). It functions in the pathway pyrimidine metabolism; UMP biosynthesis via de novo pathway; (S)-dihydroorotate from bicarbonate: step 3/3. Functionally, catalyzes the reversible cyclization of carbamoyl aspartate to dihydroorotate. This Rhizobium etli (strain ATCC 51251 / DSM 11541 / JCM 21823 / NBRC 15573 / CFN 42) protein is Dihydroorotase.